Here is a 168-residue protein sequence, read N- to C-terminus: WAP four-disulfide core domain protein 2 (168 aa).

The signal sequence occupies residues 1 to 30; that stretch reads MPACRLCLLATGLLLGLLLFTPLSATGTRA. WAP domains are found at residues 31-74 and 119-167; these read EKPG…SKPN and NGEK…TTPK. Cystine bridges form between Cys36/Cys62, Cys45/Cys66, Cys49/Cys61, and Cys55/Cys70. The interval 100–123 is disordered; that stretch reads PLSRGQVSTKPPVVTKEGGNGEKQ. Intrachain disulfides connect Cys126/Cys154, Cys137/Cys158, Cys141/Cys153, and Cys147/Cys163.

As to quaternary structure, homotrimer; disulfide-linked.

The protein localises to the secreted. Functionally, broad range protease inhibitor. The polypeptide is WAP four-disulfide core domain protein 2 (Wfdc2) (Rattus norvegicus (Rat)).